We begin with the raw amino-acid sequence, 390 residues long: Phosphopentomutase (390 aa).

Mn(2+) contacts are provided by D11, D283, H288, D324, H325, and H336.

Belongs to the phosphopentomutase family. The cofactor is Mn(2+).

Its subcellular location is the cytoplasm. The enzyme catalyses 2-deoxy-alpha-D-ribose 1-phosphate = 2-deoxy-D-ribose 5-phosphate. It carries out the reaction alpha-D-ribose 1-phosphate = D-ribose 5-phosphate. Its pathway is carbohydrate degradation; 2-deoxy-D-ribose 1-phosphate degradation; D-glyceraldehyde 3-phosphate and acetaldehyde from 2-deoxy-alpha-D-ribose 1-phosphate: step 1/2. Functionally, isomerase that catalyzes the conversion of deoxy-ribose 1-phosphate (dRib-1-P) and ribose 1-phosphate (Rib-1-P) to deoxy-ribose 5-phosphate (dRib-5-P) and ribose 5-phosphate (Rib-5-P), respectively. This Alkaliphilus metalliredigens (strain QYMF) protein is Phosphopentomutase.